We begin with the raw amino-acid sequence, 716 residues long: Leucine-rich repeat neuronal protein 1 (716 aa).

Positions M1–S25 are cleaved as a signal peptide. Residues S26–S72 enclose the LRRNT domain. The Extracellular segment spans residues S26–A631. N-linked (GlcNAc...) asparagine glycosylation occurs at N69. 9 LRR repeats span residues D73–F95, N96–N117, Q120–D141, N144–G165, N168–S189, N192–P213, N216–G237, S240–K261, and N264–N285. N-linked (GlcNAc...) asparagine glycans are attached at residues N96 and N117. The LRRCT domain maps to N371–P424. An N-linked (GlcNAc...) asparagine glycan is attached at N385. In terms of domain architecture, Ig-like C2-type spans P424 to K515. A disulfide bridge connects residues C447 and C499. N517 carries N-linked (GlcNAc...) asparagine glycosylation. The Fibronectin type-III domain maps to Q525 to F619. A helical membrane pass occupies residues L632–I652. At A653–W716 the chain is on the cytoplasmic side. The segment at S692–W716 is disordered. The span at T702 to W716 shows a compositional bias: polar residues.

Expressed in brain.

The protein localises to the membrane. This is Leucine-rich repeat neuronal protein 1 (Lrrn1) from Mus musculus (Mouse).